Here is a 444-residue protein sequence, read N- to C-terminus: Homogentisate 1,2-dioxygenase (444 aa).

The active-site Proton acceptor is the His-298. Positions 341 and 347 each coordinate Fe cation. Positions 356 and 377 each coordinate homogentisate. A Fe cation-binding site is contributed by His-377.

This sequence belongs to the homogentisate dioxygenase family. As to quaternary structure, hexamer; dimer of trimers. Requires Fe cation as cofactor.

It catalyses the reaction homogentisate + O2 = 4-maleylacetoacetate + H(+). It participates in amino-acid degradation; L-phenylalanine degradation; acetoacetate and fumarate from L-phenylalanine: step 4/6. Its function is as follows. Involved in the catabolism of homogentisate (2,5-dihydroxyphenylacetate or 2,5-OH-PhAc), a central intermediate in the degradation of phenylalanine and tyrosine. Catalyzes the oxidative ring cleavage of the aromatic ring of homogentisate to yield maleylacetoacetate. The chain is Homogentisate 1,2-dioxygenase from Burkholderia cenocepacia (strain ATCC BAA-245 / DSM 16553 / LMG 16656 / NCTC 13227 / J2315 / CF5610) (Burkholderia cepacia (strain J2315)).